A 149-amino-acid chain; its full sequence is Endoribonuclease YbeY (149 aa).

Residues histidine 106, histidine 110, and histidine 116 each coordinate Zn(2+).

It belongs to the endoribonuclease YbeY family. Zn(2+) serves as cofactor.

The protein resides in the cytoplasm. Single strand-specific metallo-endoribonuclease involved in late-stage 70S ribosome quality control and in maturation of the 3' terminus of the 16S rRNA. This chain is Endoribonuclease YbeY, found in Methylobacillus flagellatus (strain ATCC 51484 / DSM 6875 / VKM B-1610 / KT).